The following is a 154-amino-acid chain: Transcriptional repressor NrdR (154 aa).

The segment at 3-34 (CPFCGANDTKVIDSRLVAEGEQVRRRRECLAC) is a zinc-finger region. An ATP-cone domain is found at 49-139 (PRLIKTDGSR…VYRRFQDLNE (91 aa)).

Belongs to the NrdR family. Requires Zn(2+) as cofactor.

In terms of biological role, negatively regulates transcription of bacterial ribonucleotide reductase nrd genes and operons by binding to NrdR-boxes. This Pseudomonas fluorescens (strain Pf0-1) protein is Transcriptional repressor NrdR.